A 130-amino-acid chain; its full sequence is Small ribosomal subunit protein uS9 (130 aa).

Residues R106–R130 form a disordered region. Positions V111–R130 are enriched in basic residues.

The protein belongs to the universal ribosomal protein uS9 family.

The polypeptide is Small ribosomal subunit protein uS9 (Streptococcus pneumoniae (strain ATCC 700669 / Spain 23F-1)).